Here is a 742-residue protein sequence, read N- to C-terminus: Collectin-12 (742 aa).

The Cytoplasmic portion of the chain corresponds to 1–37 (MKDDFAEEEEVQSFGYKRFGIQEGTQCTKCKNNWALK). The chain crosses the membrane as a helical; Signal-anchor for type II membrane protein span at residues 38-58 (FSIILLYILCVLLTITIAILG). The Extracellular segment spans residues 59 to 742 (YKVVEKMDNV…DMDKEQIFGV (684 aa)). Coiled coils occupy residues 71 to 101 (GLETSHRRYTEKLTEVESDLKKLDDQAGQKA) and 271 to 334 (NNSA…QLEE). The segment at 439–605 (TILQGPPGPR…SEPTSVPEAN (167 aa)) is disordered. 2 consecutive Collagen-like domains span residues 467–526 (GQKG…SGDP) and 527–586 (GPPG…PGPP). Over residues 475-492 (PGPPGPAGEKGPPGPIGP) the composition is skewed to pro residues. 2 stretches are compositionally biased toward low complexity: residues 502–522 (RGSPGSKGQRGSPGKTGLPGP) and 532–556 (QGKDGPQGPQGPPGFQGLQGTVGEP). Pro residues predominate over residues 571–589 (PGLPGPKGPPGPPGPPGPG). 3 disulfide bridges follow: Cys607/Cys618, Cys635/Cys730, and Cys708/Cys722. Residues 614-731 (YTEKCYYFSI…CEDVNNFICE (118 aa)) form the C-type lectin domain. Ile644, Asn646, Glu650, Asp670, and Glu674 together coordinate Ca(2+). A carbohydrate is bound by residues Lys691, Gln694, and Asp696. Ca(2+) is bound by residues Gln694, Asp696, Asn697, Glu706, Asp707, Asn718, Asp719, and Glu731. An a carbohydrate-binding site is contributed by Glu706. The a carbohydrate site is built by Asn718 and Asp719.

In terms of tissue distribution, widely expressed.

The protein resides in the membrane. Its function is as follows. Scavenger receptor that displays several functions associated with host defense. Binds to carbohydrates. This chain is Collectin-12 (COLEC12), found in Gallus gallus (Chicken).